Consider the following 420-residue polypeptide: Glucose-1-phosphate adenylyltransferase (420 aa).

Residues tyrosine 107, glycine 172, 187 to 188 (EK), and serine 205 each bind alpha-D-glucose 1-phosphate.

The protein belongs to the bacterial/plant glucose-1-phosphate adenylyltransferase family. In terms of assembly, homotetramer.

The catalysed reaction is alpha-D-glucose 1-phosphate + ATP + H(+) = ADP-alpha-D-glucose + diphosphate. It functions in the pathway glycan biosynthesis; glycogen biosynthesis. In terms of biological role, involved in the biosynthesis of ADP-glucose, a building block required for the elongation reactions to produce glycogen. Catalyzes the reaction between ATP and alpha-D-glucose 1-phosphate (G1P) to produce pyrophosphate and ADP-Glc. This chain is Glucose-1-phosphate adenylyltransferase, found in Bradyrhizobium diazoefficiens (strain JCM 10833 / BCRC 13528 / IAM 13628 / NBRC 14792 / USDA 110).